Consider the following 379-residue polypeptide: Actin, cytoplasmic (379 aa).

Belongs to the actin family.

It localises to the cytoplasm. It is found in the cytoskeleton. The enzyme catalyses ATP + H2O = ADP + phosphate + H(+). In terms of biological role, actins are highly conserved proteins that are involved in various types of cell motility and are ubiquitously expressed in all eukaryotic cells. This Euplotes crassus protein is Actin, cytoplasmic.